The chain runs to 210 residues: THAP domain-containing protein 1 (210 aa).

Residues 5–57 (CSAYGCKNRYDKDKPVSFHKFPLTRPSLCKQWEAAVKRKNFKPTKYSSICSEH) form a THAP-type zinc finger. The HCFC1-binding motif (HBM) motif lies at 131 to 134 (DHNY). The stretch at 137–187 (EDTMHQRKRILQLEQQVEKLRKKLKTAQQRCRRQERQLEKLKEVVHFQREK) forms a coiled coil.

This sequence belongs to the THAP1 family. Interacts with PAWR. Component of a THAP1/THAP3-HCFC1-OGT complex that contains, either THAP1 or THAP3, HCFC1 and OGT. Interacts with OGT. Interacts (via the HBM) with HCFC1 (via the Kelch-repeat domain); the interaction recruits HCFC1 to the RRM1 promoter. In terms of tissue distribution, highest levels in heart, liver and kidney. Lower levels in brain and lung.

The protein localises to the nucleus. Its subcellular location is the nucleoplasm. The protein resides in the PML body. Its function is as follows. DNA-binding transcription regulator that regulates endothelial cell proliferation and G1/S cell-cycle progression. Specifically binds the 5'-[AT]NTNN[GT]GGCA[AGT]-3' core DNA sequence and acts by modulating expression of pRB-E2F cell-cycle target genes, including RRM1. Component of a THAP1/THAP3-HCFC1-OGT complex that is required for the regulation of the transcriptional activity of RRM1. May also have pro-apoptotic activity by potentiating both serum-withdrawal and TNF-induced apoptosis. The sequence is that of THAP domain-containing protein 1 (Thap1) from Mus musculus (Mouse).